A 144-amino-acid chain; its full sequence is Maximins 4/H3 type 3 (144 aa).

The signal sequence occupies residues 1–18 (MNFKYIIAVSFFIASAYA). A propeptide spanning residues 19–43 (RTEEKDVQSLSQRDVLEEESLREIR) is cleaved from the precursor. Residue N70 is modified to Asparagine amide. The propeptide occupies 74–123 (TAEDHEVMKRLEAVMRDLDSLDHPEEASERQTRGFNQEEIANLFTKKEKR). I143 carries the isoleucine amide modification.

Belongs to the bombinin family. As to expression, expressed by the skin glands.

Its subcellular location is the secreted. Its function is as follows. Maximin-4 shows antibacterial activity against both Gram-positive and Gram-negative bacteria. It also shows antimicrobial activity against the fungus C.albicans, but not against A.flavus nor P.uticale. It has little hemolytic activity. It does not possess a significant cytotoxicity against tumor cell lines. It does not possess a significant anti-HIV activity. Functionally, maximin-H3 shows antibacterial activity against both Gram-positive and Gram-negative bacteria. It also shows antimicrobial activity against the fungus C.albicans. Shows strong hemolytic activity. The polypeptide is Maximins 4/H3 type 3 (Bombina maxima (Giant fire-bellied toad)).